A 416-amino-acid chain; its full sequence is POC1 centriolar protein homolog A (416 aa).

WD repeat units lie at residues 16 to 55, 58 to 97, 100 to 139, 142 to 181, 184 to 223, 226 to 265, and 268 to 307; these read GHRDAITSLDFSPSGKQIASGSVDASVMVWNMKPQSRAYR, GHKDAVTCVQFSPSAHLLASSSRDKTVRLWVPSVKGESVL, AHTGSVRSVCFSADGQSLLTASDDQSIKLWSVHRQKIICT, EHNNWVRCARFSPDGQLMVSVSDDRTVKLWDASSRQLIHT, EPGGYSSYVDFHPSSTCIATASSDNTVRVWDIRTHTLLQH, VHSAAVNALSFHPSGNHLLTASSDSTLKILDLLEGRLLYT, and GHQGSASCVSFSRSGDQFASAGSDQQVMVWRTNFDSVDYS. The interval 311 to 340 is disordered; the sequence is QQKRDHRTPSAQASGAAGDPESRSGQKTEV. A coiled-coil region spans residues 380-412; it reads QLDVLTQTVAILEQRLTLTEDKLKECLEQQHQA.

The protein belongs to the WD repeat POC1 family.

In terms of biological role, may play an important role in centriole assembly and/or stability and ciliogenesis. This Danio rerio (Zebrafish) protein is POC1 centriolar protein homolog A.